We begin with the raw amino-acid sequence, 183 residues long: U3 small nucleolar ribonucleoprotein protein imp3 (183 aa).

The S4 RNA-binding domain occupies 108 to 174 (RRLPVVMRNI…IKKHVMDYNN (67 aa)).

This sequence belongs to the universal ribosomal protein uS4 family. Component of a heterotrimeric complex containing imp3, imp4 and mpp10.

The protein resides in the nucleus. Its subcellular location is the nucleolus. Component of the U3 small nucleolar ribonucleoprotein. Required for the early cleavages at sites A0, A1 and A2 during 18S ribosomal pre-RNA processing. The sequence is that of U3 small nucleolar ribonucleoprotein protein imp3 from Caenorhabditis elegans.